The sequence spans 72 residues: Translation initiation factor IF-1 (72 aa).

One can recognise an S1-like domain in the interval 1–72 (MSKQDVIEVE…TRGRIVYRYK (72 aa)).

The protein belongs to the IF-1 family. Component of the 30S ribosomal translation pre-initiation complex which assembles on the 30S ribosome in the order IF-2 and IF-3, IF-1 and N-formylmethionyl-tRNA(fMet); mRNA recruitment can occur at any time during PIC assembly.

It is found in the cytoplasm. One of the essential components for the initiation of protein synthesis. Stabilizes the binding of IF-2 and IF-3 on the 30S subunit to which N-formylmethionyl-tRNA(fMet) subsequently binds. Helps modulate mRNA selection, yielding the 30S pre-initiation complex (PIC). Upon addition of the 50S ribosomal subunit IF-1, IF-2 and IF-3 are released leaving the mature 70S translation initiation complex. This chain is Translation initiation factor IF-1, found in Pelotomaculum thermopropionicum (strain DSM 13744 / JCM 10971 / SI).